Consider the following 373-residue polypeptide: Probable quinol oxidase subunit 2 (373 aa).

The signal sequence occupies residues methionine 1–glycine 19. A lipid anchor (N-palmitoyl cysteine) is attached at cysteine 20. Cysteine 20 is lipidated: S-diacylglycerol cysteine. The next 2 helical transmembrane spans lie at phenylalanine 38–phenylalanine 58 and leucine 82–valine 102. Basic and acidic residues-rich tracts occupy residues glutamate 292 to glycine 320 and glutamate 339 to histidine 373. Residues glutamate 292–histidine 373 are disordered.

Belongs to the cytochrome c oxidase subunit 2 family.

It is found in the cell membrane. It carries out the reaction 2 a quinol + O2 = 2 a quinone + 2 H2O. Catalyzes quinol oxidation with the concomitant reduction of oxygen to water. Subunit II transfers the electrons from a quinol to the binuclear center of the catalytic subunit I. The sequence is that of Probable quinol oxidase subunit 2 (qoxA) from Staphylococcus saprophyticus subsp. saprophyticus (strain ATCC 15305 / DSM 20229 / NCIMB 8711 / NCTC 7292 / S-41).